Reading from the N-terminus, the 111-residue chain is Large ribosomal subunit protein uL24 (111 aa).

Positions 48-65 (EKPSRSNREGGRTEREAP) are enriched in basic and acidic residues. The interval 48–111 (EKPSRSNREG…AKTTGEELDD (64 aa)) is disordered. Polar residues predominate over residues 69–80 (SNVNPIDSNGES). The segment covering 86–95 (KKVEDPDTGR) has biased composition (basic and acidic residues).

This sequence belongs to the universal ribosomal protein uL24 family. In terms of assembly, part of the 50S ribosomal subunit.

One of two assembly initiator proteins, it binds directly to the 5'-end of the 23S rRNA, where it nucleates assembly of the 50S subunit. Functionally, one of the proteins that surrounds the polypeptide exit tunnel on the outside of the subunit. The sequence is that of Large ribosomal subunit protein uL24 from Salinibacter ruber (strain DSM 13855 / M31).